Reading from the N-terminus, the 638-residue chain is Threonine--tRNA ligase (638 aa).

Positions 1 to 61 (MPVITLPDGS…DADAQLQIIT (61 aa)) constitute a TGS domain. The interval 243–534 (DHRKIGKALN…LTEEFAGFFP (292 aa)) is catalytic. Residues Cys334, His385, and His511 each coordinate Zn(2+).

Belongs to the class-II aminoacyl-tRNA synthetase family. As to quaternary structure, homodimer. It depends on Zn(2+) as a cofactor.

The protein localises to the cytoplasm. It catalyses the reaction tRNA(Thr) + L-threonine + ATP = L-threonyl-tRNA(Thr) + AMP + diphosphate + H(+). In terms of biological role, catalyzes the attachment of threonine to tRNA(Thr) in a two-step reaction: L-threonine is first activated by ATP to form Thr-AMP and then transferred to the acceptor end of tRNA(Thr). Also edits incorrectly charged L-seryl-tRNA(Thr). This is Threonine--tRNA ligase from Alteromonas mediterranea (strain DSM 17117 / CIP 110805 / LMG 28347 / Deep ecotype).